A 257-amino-acid chain; its full sequence is Zinc transporter ZupT (257 aa).

Helical transmembrane passes span 5–25, 32–52, and 61–81; these read LILT…GVLG, LLAF…LMEM, and GMSP…YFGL. 2 residues coordinate Fe(2+): asparagine 120 and glutamate 123. 2 residues coordinate Zn(2+): glutamate 123 and histidine 148. 4 helical membrane-spanning segments follow: residues 137–157, 171–191, 195–215, and 236–256; these read LGFG…LAVA, ILWA…AWLI, MISP…MVAL, and GVLC…TAGI. The Fe(2+) site is built by asparagine 149, glutamate 152, and glutamate 181. Glutamate 152 contributes to the Zn(2+) binding site.

Belongs to the ZIP transporter (TC 2.A.5) family. ZupT subfamily.

It is found in the cell inner membrane. The enzyme catalyses Zn(2+)(in) = Zn(2+)(out). In terms of biological role, mediates zinc uptake. May also transport other divalent cations. In Escherichia coli O127:H6 (strain E2348/69 / EPEC), this protein is Zinc transporter ZupT.